Here is a 309-residue protein sequence, read N- to C-terminus: Porphobilinogen deaminase (309 aa).

S-(dipyrrolylmethanemethyl)cysteine is present on Cys-241.

It belongs to the HMBS family. As to quaternary structure, monomer. The cofactor is dipyrromethane.

The catalysed reaction is 4 porphobilinogen + H2O = hydroxymethylbilane + 4 NH4(+). The protein operates within porphyrin-containing compound metabolism; protoporphyrin-IX biosynthesis; coproporphyrinogen-III from 5-aminolevulinate: step 2/4. Its function is as follows. Tetrapolymerization of the monopyrrole PBG into the hydroxymethylbilane pre-uroporphyrinogen in several discrete steps. This Bacillus anthracis (strain A0248) protein is Porphobilinogen deaminase.